The following is a 200-amino-acid chain: Glycosyl hydrolase family 19 domain-containing protein HI_1415 (200 aa).

This sequence belongs to the glycosyl hydrolase 19 family.

The polypeptide is Glycosyl hydrolase family 19 domain-containing protein HI_1415 (Haemophilus influenzae (strain ATCC 51907 / DSM 11121 / KW20 / Rd)).